A 207-amino-acid polypeptide reads, in one-letter code: Large ribosomal subunit protein uL4 (207 aa).

A disordered region spans residues 44 to 77; it reads RRQGTHDTKTRSEVRGGGRKPWRQKGTGRARHGT. Positions 47–59 are enriched in basic and acidic residues; it reads GTHDTKTRSEVRG. Basic residues predominate over residues 60–77; sequence GGRKPWRQKGTGRARHGT.

Belongs to the universal ribosomal protein uL4 family. As to quaternary structure, part of the 50S ribosomal subunit.

Functionally, one of the primary rRNA binding proteins, this protein initially binds near the 5'-end of the 23S rRNA. It is important during the early stages of 50S assembly. It makes multiple contacts with different domains of the 23S rRNA in the assembled 50S subunit and ribosome. Its function is as follows. Forms part of the polypeptide exit tunnel. In Desulforudis audaxviator (strain MP104C), this protein is Large ribosomal subunit protein uL4.